The sequence spans 312 residues: NAD(P)(+)--arginine ADP-ribosyltransferase 1 (312 aa).

The N-terminal stretch at 1–20 (MELLALRWVLLAGTLLSTSA) is a signal peptide. A propeptide spanning residues 21–31 (ASSALQEGDLG) is cleaved from the precursor. Disulfide bonds link C51–C260 and C159–C208. In terms of domain architecture, TR mART core spans 71 to 256 (IAYAVTWRQA…IQLHSKGKMS (186 aa)). Positions 108, 164, and 183 each coordinate NAD(+). R164 is a catalytic residue. Residue S186 is part of the active site. S217 is a binding site for NAD(+). E224 is a catalytic residue. The propeptide occupies 267–312 (GGQWGRGHQEVGLGLSPGLSLPVLPCRRRVWEGLGHREGDPIPAAV).

Belongs to the Arg-specific ADP-ribosyltransferase family.

The protein localises to the secreted. Its subcellular location is the extracellular space. It catalyses the reaction L-arginyl-[protein] + NAD(+) = N(omega)-(ADP-D-ribosyl)-L-arginyl-[protein] + nicotinamide + H(+). The polypeptide is NAD(P)(+)--arginine ADP-ribosyltransferase 1 (Gallus gallus (Chicken)).